The primary structure comprises 499 residues: Probable malate:quinone oxidoreductase 4 (499 aa).

Belongs to the MQO family. FAD is required as a cofactor.

The catalysed reaction is (S)-malate + a quinone = a quinol + oxaloacetate. It functions in the pathway carbohydrate metabolism; tricarboxylic acid cycle; oxaloacetate from (S)-malate (quinone route): step 1/1. In Staphylococcus epidermidis (strain ATCC 35984 / DSM 28319 / BCRC 17069 / CCUG 31568 / BM 3577 / RP62A), this protein is Probable malate:quinone oxidoreductase 4.